The following is a 264-amino-acid chain: Glutamate racemase (264 aa).

Residues 10–11 (DS) and 42–43 (YG) each bind substrate. The active-site Proton donor/acceptor is the C73. A substrate-binding site is contributed by 74-75 (NT). Residue C183 is the Proton donor/acceptor of the active site. Residue 184–185 (TH) coordinates substrate.

Belongs to the aspartate/glutamate racemases family.

It catalyses the reaction L-glutamate = D-glutamate. It functions in the pathway cell wall biogenesis; peptidoglycan biosynthesis. In terms of biological role, provides the (R)-glutamate required for cell wall biosynthesis. This is Glutamate racemase from Streptococcus pyogenes serotype M18 (strain MGAS8232).